The chain runs to 327 residues: MEEAPAEQRHVPVLLDRCLDLLAPALDTEAPVVLDATLGMGGHTHAMLERFPHLRVVGIDRDPQALELAGRRLQRFGSRFASIHTTYDHIADAAAAAGVERVDGVLFDLGVSSLQLDERERGFAYSFDAPLDMRMDSRAELSAYTVVNEYSEARLRDIIFRWGEDRFAPRIARAIVAARADAPLRTTAQLVDAVRSAVPAAAQHKKGHPAKQTFQALRIEVNEELDVLERAIPAAVETVRVGGRVIAMSYHSLEDRIVKQEFARGARSTAPRGFPVELPEHQPVLKVLTRGAERADEQETLENPRAASARLRAVERLRETTTPGSAR.

S-adenosyl-L-methionine-binding positions include 41-43, D60, Y87, D108, and Q115; that span reads GGH. The interval 292 to 327 is disordered; sequence AERADEQETLENPRAASARLRAVERLRETTTPGSAR.

This sequence belongs to the methyltransferase superfamily. RsmH family.

The protein resides in the cytoplasm. The enzyme catalyses cytidine(1402) in 16S rRNA + S-adenosyl-L-methionine = N(4)-methylcytidine(1402) in 16S rRNA + S-adenosyl-L-homocysteine + H(+). Its function is as follows. Specifically methylates the N4 position of cytidine in position 1402 (C1402) of 16S rRNA. The chain is Ribosomal RNA small subunit methyltransferase H from Kocuria rhizophila (strain ATCC 9341 / DSM 348 / NBRC 103217 / DC2201).